Here is a 263-residue protein sequence, read N- to C-terminus: PDZ domain-containing protein 9 (263 aa).

In terms of domain architecture, PDZ spans 30–109 (QTKLTVGSMG…GTILQIKVYR (80 aa)).

This is PDZ domain-containing protein 9 (PDZD9) from Bos taurus (Bovine).